The following is a 258-amino-acid chain: 5'-nucleotidase SurE (258 aa).

Positions 16, 17, 47, and 99 each coordinate a divalent metal cation.

The protein belongs to the SurE nucleotidase family. A divalent metal cation serves as cofactor.

It is found in the cytoplasm. It carries out the reaction a ribonucleoside 5'-phosphate + H2O = a ribonucleoside + phosphate. Its function is as follows. Nucleotidase that shows phosphatase activity on nucleoside 5'-monophosphates. This Coxiella burnetii (strain Dugway 5J108-111) protein is 5'-nucleotidase SurE.